A 553-amino-acid polypeptide reads, in one-letter code: Glycerol kinase 3 (553 aa).

Substrate is bound at residue threonine 20. ATP is bound at residue arginine 24. 3 residues coordinate substrate: arginine 94, tyrosine 148, and aspartate 259. ATP is bound by residues threonine 281, glycine 326, and 427–431 (GMTSN).

It belongs to the FGGY kinase family.

The protein resides in the mitochondrion outer membrane. Its subcellular location is the cytoplasm. The enzyme catalyses glycerol + ATP = sn-glycerol 3-phosphate + ADP + H(+). It participates in polyol metabolism; glycerol degradation via glycerol kinase pathway; sn-glycerol 3-phosphate from glycerol: step 1/1. In terms of biological role, may be involved in the regulation of glycerol uptake and metabolism. The protein is Glycerol kinase 3 of Homo sapiens (Human).